The sequence spans 57 residues: UPF0391 membrane protein RPA3029 (57 aa).

Helical transmembrane passes span 6–26 (WALI…TGIS) and 35–55 (ILFY…FTIF).

It belongs to the UPF0391 family.

The protein localises to the cell membrane. In Rhodopseudomonas palustris (strain ATCC BAA-98 / CGA009), this protein is UPF0391 membrane protein RPA3029.